The primary structure comprises 272 residues: F-actin-capping protein subunit beta (272 aa).

Belongs to the F-actin-capping protein beta subunit family. Component of the F-actin capping complex, composed of a heterodimer of an alpha and a beta subunit.

The protein localises to the cytoplasm. Its subcellular location is the cytoskeleton. In terms of biological role, F-actin-capping proteins bind in a Ca(2+)-independent manner to the fast growing ends of actin filaments (barbed end) thereby blocking the exchange of subunits at these ends. Unlike other capping proteins (such as gelsolin and severin), these proteins do not sever actin filaments. In Dictyostelium discoideum (Social amoeba), this protein is F-actin-capping protein subunit beta (acpA).